Here is a 328-residue protein sequence, read N- to C-terminus: Palmitoyltransferase ZDHHC15A (328 aa).

The Cytoplasmic portion of the chain corresponds to 1 to 14; the sequence is MLLPACLRRCARLL. A helical membrane pass occupies residues 15–35; it reads FWIPVLVVIVVVMWSYYAYVV. The Lumenal portion of the chain corresponds to 36–48; sequence HFCWILLSSATQR. Residues 49–69 traverse the membrane as a helical segment; the sequence is VVFLCLFHLCFGMFSWSFWKA. Residues 70 to 166 lie on the Cytoplasmic side of the membrane; sequence VSTPPSSPSV…NNCMGFSNYK (97 aa). A DHHC domain is found at 123–173; that stretch reads RFCHHCQLIKPDRCHHCSVCQTCVLKMDHHCLWLNNCMGFSNYKFFMLFLL. The Zn(2+) site is built by Cys125 and Cys128. Lys132 is a binding site for substrate. Residues His138, Cys139, Cys142, Cys145, and His152 each coordinate Zn(2+). Cys153 (S-palmitoyl cysteine intermediate) is an active-site residue. Residue Cys159 participates in Zn(2+) binding. A helical transmembrane segment spans residues 167-187; sequence FFMLFLLYSLLYCLLIVSTVT. Residues 188 to 206 lie on the Lumenal side of the membrane; sequence PTVIQLWRGRLFDSCVKLH. A helical transmembrane segment spans residues 207–227; that stretch reads VLFLTLVSAIFAITLCFLLIF. The Cytoplasmic segment spans residues 228-328; it reads HIWLLTSNKT…KEAAVTIAVD (101 aa).

Belongs to the DHHC palmitoyltransferase family. Autopalmitoylated (in vitro).

It is found in the golgi apparatus membrane. The protein resides in the postsynaptic density. It catalyses the reaction L-cysteinyl-[protein] + hexadecanoyl-CoA = S-hexadecanoyl-L-cysteinyl-[protein] + CoA. The catalysed reaction is L-cysteinyl-[protein] + tetradecanoyl-CoA = S-tetradecanoyl-L-cysteinyl-[protein] + CoA. The enzyme catalyses L-cysteinyl-[protein] + octadecanoyl-CoA = S-octadecanoyl-L-cysteinyl-[protein] + CoA. Palmitoyltransferase that catalyzes the addition of palmitate onto various protein substrates. Has no stringent fatty acid selectivity and in addition to palmitate can also transfer onto target proteins myristate from tetradecanoyl-CoA and stearate from octadecanoyl-CoA. May thereby regulate target proteins association and localization to membranes. The chain is Palmitoyltransferase ZDHHC15A (zdhhc15a) from Danio rerio (Zebrafish).